Consider the following 354-residue polypeptide: Photosystem II protein D1 1 (354 aa).

3 helical membrane passes run Y29 to T46, H118 to L133, and W142 to A156. H118 is a chlorophyll a binding site. Position 126 (Y126) interacts with pheophytin a. Positions 170 and 189 each coordinate [CaMn4O5] cluster. The chain crosses the membrane as a helical span at residues F197–L218. Chlorophyll a is bound at residue H198. A quinone contacts are provided by residues H215 and S264–F265. H215 contributes to the Fe cation binding site. Residue H272 coordinates Fe cation. Residues F274–L288 form a helical membrane-spanning segment. Residues H332, E333, D342, and A344 each coordinate [CaMn4O5] cluster. Residues A345–G354 constitute a propeptide that is removed on maturation.

The protein belongs to the reaction center PufL/M/PsbA/D family. In terms of assembly, PSII is composed of 1 copy each of membrane proteins PsbA, PsbB, PsbC, PsbD, PsbE, PsbF, PsbH, PsbI, PsbJ, PsbK, PsbL, PsbM, PsbT, PsbX, PsbY, PsbZ, Psb30/Ycf12, peripheral proteins PsbO, CyanoQ (PsbQ), PsbU, PsbV and a large number of cofactors. It forms dimeric complexes. The D1/D2 heterodimer binds P680, chlorophylls that are the primary electron donor of PSII, and subsequent electron acceptors. It shares a non-heme iron and each subunit binds pheophytin, quinone, additional chlorophylls, carotenoids and lipids. D1 provides most of the ligands for the Mn4-Ca-O5 cluster of the oxygen-evolving complex (OEC). There is also a Cl(-1) ion associated with D1 and D2, which is required for oxygen evolution. The PSII complex binds additional chlorophylls, carotenoids and specific lipids. serves as cofactor. Tyr-161 forms a radical intermediate that is referred to as redox-active TyrZ, YZ or Y-Z. In terms of processing, C-terminally processed by CtpA; processing is essential to allow assembly of the oxygen-evolving complex and thus photosynthetic growth.

Its subcellular location is the cellular thylakoid membrane. It catalyses the reaction 2 a plastoquinone + 4 hnu + 2 H2O = 2 a plastoquinol + O2. Its function is as follows. Photosystem II (PSII) is a light-driven water:plastoquinone oxidoreductase that uses light energy to abstract electrons from H(2)O, generating O(2) and a proton gradient subsequently used for ATP formation. It consists of a core antenna complex that captures photons, and an electron transfer chain that converts photonic excitation into a charge separation. The D1/D2 (PsbA/PsbD) reaction center heterodimer binds P680, the primary electron donor of PSII as well as several subsequent electron acceptors. The protein is Photosystem II protein D1 1 of Synechococcus sp. (strain JA-3-3Ab) (Cyanobacteria bacterium Yellowstone A-Prime).